A 165-amino-acid polypeptide reads, in one-letter code: NADPH-dependent 7-cyano-7-deazaguanine reductase (165 aa).

Catalysis depends on Cys-56, which acts as the Thioimide intermediate. The active-site Proton donor is Asp-63. Residues 78 to 80 and 97 to 98 contribute to the substrate site; these read VES and HE.

Belongs to the GTP cyclohydrolase I family. QueF type 1 subfamily.

The protein localises to the cytoplasm. The enzyme catalyses 7-aminomethyl-7-carbaguanine + 2 NADP(+) = 7-cyano-7-deazaguanine + 2 NADPH + 3 H(+). It participates in tRNA modification; tRNA-queuosine biosynthesis. In terms of biological role, catalyzes the NADPH-dependent reduction of 7-cyano-7-deazaguanine (preQ0) to 7-aminomethyl-7-deazaguanine (preQ1). The polypeptide is NADPH-dependent 7-cyano-7-deazaguanine reductase (Bacillus thuringiensis subsp. konkukian (strain 97-27)).